The primary structure comprises 192 residues: Ion-translocating oxidoreductase complex subunit A (192 aa).

The next 6 helical transmembrane spans lie at 5 to 25, 39 to 59, 65 to 85, 102 to 122, 134 to 154, and 171 to 191; these read ALIL…FLGL, TGMG…SYLV, APLG…AAVV, VLGI…VALL, ALYG…FASI, and AIAL…IGLV.

Belongs to the NqrDE/RnfAE family. As to quaternary structure, the complex is composed of six subunits: RnfA, RnfB, RnfC, RnfD, RnfE and RnfG.

It localises to the cell inner membrane. In terms of biological role, part of a membrane-bound complex that couples electron transfer with translocation of ions across the membrane. In Thioalkalivibrio sulfidiphilus (strain HL-EbGR7), this protein is Ion-translocating oxidoreductase complex subunit A.